The following is a 204-amino-acid chain: 34 kDa membrane antigen (204 aa).

An N-terminal signal peptide occupies residues 1–19; the sequence is MKRVSLLGSAAIFALVFSA. Residue Cys20 is the site of N-palmitoyl cysteine attachment. Cys20 carries the S-diacylglycerol cysteine lipid modification.

The protein belongs to the UPF0423 family.

Its subcellular location is the cell membrane. Functionally, this antigen is a pathogen-specific membrane immunogen. This Treponema pallidum (strain Nichols) protein is 34 kDa membrane antigen (tpd).